The sequence spans 254 residues: Ribonuclease PH (254 aa).

Phosphate is bound by residues Arg-90 and 128 to 130; that span reads GTR.

Belongs to the RNase PH family. As to quaternary structure, homohexameric ring arranged as a trimer of dimers.

It carries out the reaction tRNA(n+1) + phosphate = tRNA(n) + a ribonucleoside 5'-diphosphate. Functionally, phosphorolytic 3'-5' exoribonuclease that plays an important role in tRNA 3'-end maturation. Removes nucleotide residues following the 3'-CCA terminus of tRNAs; can also add nucleotides to the ends of RNA molecules by using nucleoside diphosphates as substrates, but this may not be physiologically important. Probably plays a role in initiation of 16S rRNA degradation (leading to ribosome degradation) during starvation. The protein is Ribonuclease PH of Corynebacterium kroppenstedtii (strain DSM 44385 / JCM 11950 / CIP 105744 / CCUG 35717).